An 89-amino-acid polypeptide reads, in one-letter code: Large ribosomal subunit protein uL30 (89 aa).

It belongs to the universal ribosomal protein uL30 family. As to quaternary structure, part of the 50S ribosomal subunit.

The sequence is that of Large ribosomal subunit protein uL30 from Myxococcus xanthus (strain DK1622).